A 449-amino-acid chain; its full sequence is 23S rRNA (uracil(1939)-C(5))-methyltransferase RlmD (449 aa).

Positions 12–70 constitute a TRAM domain; it reads SKQLSAKQSFSVHQLDHLGAGIAQHQGKVVFIPGALPSETVQAQLTEQKKNYARAKLIK. Residues Cys-83, Cys-89, Cys-92, and Cys-170 each coordinate [4Fe-4S] cluster. S-adenosyl-L-methionine is bound by residues Gln-282, Phe-311, Asn-316, Glu-332, Asp-359, and Asp-379. The Nucleophile role is filled by Cys-405.

It belongs to the class I-like SAM-binding methyltransferase superfamily. RNA M5U methyltransferase family. RlmD subfamily.

It carries out the reaction uridine(1939) in 23S rRNA + S-adenosyl-L-methionine = 5-methyluridine(1939) in 23S rRNA + S-adenosyl-L-homocysteine + H(+). Its function is as follows. Catalyzes the formation of 5-methyl-uridine at position 1939 (m5U1939) in 23S rRNA. This Shewanella sp. (strain MR-4) protein is 23S rRNA (uracil(1939)-C(5))-methyltransferase RlmD.